Here is a 241-residue protein sequence, read N- to C-terminus: Probable FKBP-type peptidyl-prolyl cis-trans isomerase (241 aa).

Residues 150 to 241 (TDTVKVHYTG…VLDVNPKSEK (92 aa)) form the PPIase FKBP-type domain.

This sequence belongs to the FKBP-type PPIase family.

The enzyme catalyses [protein]-peptidylproline (omega=180) = [protein]-peptidylproline (omega=0). Its function is as follows. PPIases accelerate the folding of proteins. It catalyzes the cis-trans isomerization of proline imidic peptide bonds in oligopeptides. The sequence is that of Probable FKBP-type peptidyl-prolyl cis-trans isomerase from Haemophilus influenzae (strain ATCC 51907 / DSM 11121 / KW20 / Rd).